Consider the following 81-residue polypeptide: Exodeoxyribonuclease 7 small subunit (81 aa).

This sequence belongs to the XseB family. Heterooligomer composed of large and small subunits.

It localises to the cytoplasm. It carries out the reaction Exonucleolytic cleavage in either 5'- to 3'- or 3'- to 5'-direction to yield nucleoside 5'-phosphates.. Bidirectionally degrades single-stranded DNA into large acid-insoluble oligonucleotides, which are then degraded further into small acid-soluble oligonucleotides. In Nitratidesulfovibrio vulgaris (strain ATCC 29579 / DSM 644 / CCUG 34227 / NCIMB 8303 / VKM B-1760 / Hildenborough) (Desulfovibrio vulgaris), this protein is Exodeoxyribonuclease 7 small subunit.